Here is a 107-residue protein sequence, read N- to C-terminus: Heme-degrading monooxygenase (107 aa).

The ABM domain maps to 2–94; the sequence is IIVTNTAKIT…YILDNKIAYY (93 aa). Asn-6 contributes to the Fe cation binding site. His-76 contacts heme.

The protein belongs to the antibiotic biosynthesis monooxygenase family. Heme-degrading monooxygenase IsdG subfamily. Homodimer.

The protein localises to the cytoplasm. The catalysed reaction is heme b + 3 reduced [NADPH--hemoprotein reductase] + 3 O2 = biliverdin IXalpha + CO + Fe(2+) + 3 oxidized [NADPH--hemoprotein reductase] + 3 H2O + H(+). In terms of biological role, allows bacterial pathogens to use the host heme as an iron source. Catalyzes the oxidative degradation of the heme macrocyclic porphyrin ring to the biliverdin in the presence of a suitable electron donor such as ascorbate or NADPH--cytochrome P450 reductase, with subsequent release of free iron. The chain is Heme-degrading monooxygenase from Bacillus cereus (strain ATCC 14579 / DSM 31 / CCUG 7414 / JCM 2152 / NBRC 15305 / NCIMB 9373 / NCTC 2599 / NRRL B-3711).